We begin with the raw amino-acid sequence, 729 residues long: Pentatricopeptide repeat-containing protein At5g01110 (729 aa).

The disordered stretch occupies residues 26–45 (TSSSPVFEPSSSSSSSSSSA). Over residues 27-45 (SSSPVFEPSSSSSSSSSSA) the composition is skewed to low complexity. 17 PPR repeats span residues 112–147 (TSLS…GVSR), 164–198 (NDSV…GFTV), 199–233 (SIDA…GVGI), 234–268 (NVYT…GVYP), 269–303 (DIVT…GFSP), 304–338 (GVYT…GLSP), 339–373 (DSTT…DVVP), 374–408 (DLVC…GLIP), 409–443 (DNVI…GCAM), 444–478 (DVVT…ALFP), 479–513 (DSYT…RIRL), 514–548 (DVVT…EILP), 549–583 (TPIS…NIKP), 584–618 (TVMI…GFVP), 619–649 (DCIS…MEEE), 656–690 (DVFT…GVNP), and 691–725 (DRST…GFSP).

This sequence belongs to the PPR family. P subfamily.

The sequence is that of Pentatricopeptide repeat-containing protein At5g01110 from Arabidopsis thaliana (Mouse-ear cress).